The primary structure comprises 198 residues: Probable GTP-binding protein EngB (198 aa).

An EngB-type G domain is found at 22 to 195 (NRVEVAFVGR…IDNLFLEFAT (174 aa)). GTP contacts are provided by residues 30 to 37 (GRSNVGKS), 57 to 61 (GKTRL), 75 to 78 (DLPG), 142 to 145 (TKSD), and 174 to 176 (FSS). Residues S37 and T59 each contribute to the Mg(2+) site.

Belongs to the TRAFAC class TrmE-Era-EngA-EngB-Septin-like GTPase superfamily. EngB GTPase family. Mg(2+) serves as cofactor.

Necessary for normal cell division and for the maintenance of normal septation. The chain is Probable GTP-binding protein EngB from Clostridium beijerinckii (strain ATCC 51743 / NCIMB 8052) (Clostridium acetobutylicum).